The chain runs to 429 residues: Protein cereblon (429 aa).

The interval 1–30 is disordered; that stretch reads MGNHLPLLPAESEEEDEMEVEDQDSKEAKK. Positions 11–22 are enriched in acidic residues; the sequence is ESEEEDEMEVED. Position 12 is a phosphoserine (Ser-12). The 239-residue stretch at 68-306 folds into the Lon N-terminal domain; that stretch reads IPVLPQVMMI…CELDIMNKCT (239 aa). Positions 305-413 constitute a CULT domain; that stretch reads CTSLCCKQCQ…LTRSALLPTI (109 aa). Positions 310 and 313 each coordinate Zn(2+). (S)-thalidomide-binding residues include His-365, Trp-367, and Trp-373. Zn(2+) is bound by residues Cys-378 and Cys-381.

This sequence belongs to the CRBN family. In terms of assembly, component of a DCX (DDB1-CUL4-X-box) protein ligase complex, at least composed of CRBN, CUL4A, DDB1 and RBX1. Interacts directly with DDB1. Interacts with KCNT1. Interacts with ILF2. Interacts with TRAF6 and ECSIT. In terms of processing, ubiquitinated, ubiquitination is mediated by its own DCX protein ligase complex.

It is found in the cytoplasm. Its subcellular location is the nucleus. It localises to the membrane. The protein operates within protein modification; protein ubiquitination. Substrate recognition component of a DCX (DDB1-CUL4-X-box) E3 protein ligase complex that mediates the ubiquitination and subsequent proteasomal degradation of target proteins, such as MEIS2, ILF2 or GLUL. Normal degradation of key regulatory proteins is required for normal limb outgrowth and expression of the fibroblast growth factor FGF8. Maintains presynaptic glutamate release and consequently cognitive functions, such as memory and learning, by negatively regulating large-conductance calcium-activated potassium (BK) channels in excitatory neurons. Likely to function by regulating the assembly and neuronal surface expression of BK channels via its interaction with KCNT1. May also be involved in regulating anxiety-like behaviors via a BK channel-independent mechanism. Plays a negative role in TLR4 signaling by interacting with TRAF6 and ECSIT, leading to inhibition of ECSIT ubiquitination, an important step of the signaling. In Pongo abelii (Sumatran orangutan), this protein is Protein cereblon (CRBN).